The chain runs to 562 residues: Chaperonin GroEL 1 (562 aa).

ATP is bound by residues 30–33 (TLGP), K51, 87–91 (DGTTT), G415, 478–480 (NAA), and D494.

This sequence belongs to the chaperonin (HSP60) family. Forms a cylinder of 14 subunits composed of two heptameric rings stacked back-to-back. Interacts with the co-chaperonin GroES.

Its subcellular location is the cytoplasm. It carries out the reaction ATP + H2O + a folded polypeptide = ADP + phosphate + an unfolded polypeptide.. Functionally, together with its co-chaperonin GroES, plays an essential role in assisting protein folding. The GroEL-GroES system forms a nano-cage that allows encapsulation of the non-native substrate proteins and provides a physical environment optimized to promote and accelerate protein folding. The chain is Chaperonin GroEL 1 from Sorangium cellulosum (strain So ce56) (Polyangium cellulosum (strain So ce56)).